The primary structure comprises 762 residues: Poly(A) RNA polymerase CID14 (762 aa).

The segment at 1–123 (MPTGFQPAES…KKEEQKAAER (123 aa)) is disordered. A compositionally biased stretch (basic residues) spans 50–62 (KKNKKDKKKKGSK). Composition is skewed to basic and acidic residues over residues 65 to 75 (QPVDEPDKKDG) and 99 to 123 (RKRDNSRGIEAGPRNKKEEQKAAER). Ser189 contacts ATP. Mg(2+) is bound by residues Asp200 and Asp202. ATP is bound by residues Gly266, Lys291, Ser309, and Tyr310. Positions 336–393 (NLGTLLIEFFELFGRNFNYNDVGISIRRGGFYFSKASRGWMKGQSFLLSIEDPQDKDN) constitute a PAP-associated domain. The segment at 482–762 (SIPLGADPKP…LGQSSGDMSD (281 aa)) is disordered. A compositionally biased stretch (acidic residues) spans 536–549 (VEDDELESDDDSDS). Polar residues predominate over residues 572–581 (RTANSRSTSR). Residue Lys610 coordinates ATP. Acidic residues-rich tracts occupy residues 677–687 (GEEEEEIDSDE) and 697–707 (SDGDLGSEDEI). The segment covering 753 to 762 (LGQSSGDMSD) has biased composition (polar residues).

This sequence belongs to the DNA polymerase type-B-like family. Component of the TRAMP complex. Requires Mg(2+) as cofactor. Mn(2+) serves as cofactor.

The protein resides in the nucleus. Its subcellular location is the nucleolus. The catalysed reaction is RNA(n) + ATP = RNA(n)-3'-adenine ribonucleotide + diphosphate. Required for 3' polyadenylation of the 5.8S and 25S rRNAs as a prelude to their degradation in the exosome. Involved in the nucleolar organization to ensure faithful chromosome segregation during mitosis. This Cryptococcus neoformans var. neoformans serotype D (strain JEC21 / ATCC MYA-565) (Filobasidiella neoformans) protein is Poly(A) RNA polymerase CID14.